We begin with the raw amino-acid sequence, 472 residues long: 6-phosphogluconate dehydrogenase, decarboxylating (472 aa).

NADP(+)-binding positions include 10–15, 33–35, 74–76, and asparagine 102; these read GMAVMG, NRT, and VQA. Residues asparagine 102 and 128–130 each bind substrate; that span reads SGG. Lysine 184 (proton acceptor) is an active-site residue. 187 to 188 contributes to the substrate binding site; it reads HN. The Proton donor role is filled by glutamate 191. The substrate site is built by tyrosine 192, lysine 262, arginine 289, arginine 447, and histidine 453.

This sequence belongs to the 6-phosphogluconate dehydrogenase family. As to quaternary structure, homodimer.

It carries out the reaction 6-phospho-D-gluconate + NADP(+) = D-ribulose 5-phosphate + CO2 + NADPH. The protein operates within carbohydrate degradation; pentose phosphate pathway; D-ribulose 5-phosphate from D-glucose 6-phosphate (oxidative stage): step 3/3. Functionally, catalyzes the oxidative decarboxylation of 6-phosphogluconate to ribulose 5-phosphate and CO(2), with concomitant reduction of NADP to NADPH. In Lactococcus lactis subsp. cremoris (strain MG1363), this protein is 6-phosphogluconate dehydrogenase, decarboxylating (gnd).